The chain runs to 221 residues: Telomere repeats-binding bouquet formation protein 2 (221 aa).

It belongs to the TERB2 family. Component of the MAJIN-TERB1-TERB2 complex, composed of MAJIN, TERB1 and TERB2.

The protein localises to the chromosome. It localises to the telomere. It is found in the nucleus inner membrane. Its function is as follows. Meiosis-specific telomere-associated protein involved in meiotic telomere attachment to the nucleus inner membrane, a crucial step for homologous pairing and synapsis. Component of the MAJIN-TERB1-TERB2 complex, which promotes telomere cap exchange by mediating attachment of telomeric DNA to the inner nuclear membrane and replacement of the protective cap of telomeric chromosomes: in early meiosis, the MAJIN-TERB1-TERB2 complex associates with telomeric DNA and the shelterin/telosome complex. During prophase, the complex matures and promotes release of the shelterin/telosome complex from telomeric DNA. In Bos taurus (Bovine), this protein is Telomere repeats-binding bouquet formation protein 2.